We begin with the raw amino-acid sequence, 142 residues long: Baculoviral IAP repeat-containing protein 5 (142 aa).

The BIR repeat unit spans residues 18 to 88 (RISTFKNWPF…KHSSGCAFLS (71 aa)). Position 20 is a phosphoserine; by AURKC (Ser-20). Lys-23 bears the N6-acetyllysine mark. At Thr-34 the chain carries Phosphothreonine; by CDK1 and CDK15. Phosphothreonine is present on Thr-48. Positions 57, 60, 77, and 84 each coordinate Zn(2+). 4 positions are modified to N6-acetyllysine: Lys-90, Lys-110, Lys-112, and Lys-115. Thr-117 carries the phosphothreonine; by AURKB modification. The residue at position 129 (Lys-129) is an N6-acetyllysine.

This sequence belongs to the IAP family. In terms of assembly, monomer or homodimer. Exists as a homodimer in the apo state and as a monomer in the CPC-bound state. The monomer protects cells against apoptosis more efficiently than the dimer. Only the dimeric form is capable of enhancing tubulin stability in cells. When phosphorylated, interacts with LAMTOR5/HBXIP; the resulting complex binds pro-CASP9, as well as active CASP9, but much less efficiently. Component of the chromosomal passenger complex (CPC) composed of at least BIRC5/survivin, CDCA8/borealin, INCENP, AURKB or AURKC; in the complex forms a triple-helix bundle-based subcomplex with INCENP and CDCA8. Interacts with JTB. Interacts (via BIR domain) with histone H3 phosphorylated at 'Thr-3' (H3pT3). Interacts with EVI5. Interacts with GTP-bound RAN in both the S and M phases of the cell cycle. Interacts with USP9X. Interacts with tubulin. Interacts with BIRC2/c-IAP1. The acetylated form at Lys-129 interacts with STAT3. The monomeric form deacetylated at Lys-129 interacts with XPO1/CRM1. The monomeric form interacts with XIAP/BIRC4. Both the dimeric and monomeric form can interact with DIABLO/SMAC. Interacts with BIRC6/bruce. Interacts with FBXL7; this interaction facilitates the polyubiquitination and subsequent proteasomal degradation of BIRC5 by the SCF(FBXL7) E3 ubiquitin-protein ligase complex. Ubiquitinated by the Cul9-RING ubiquitin-protein ligase complex, leading to its degradation. Ubiquitination is required for centrosomal targeting. Deubiquitinated by USP35 or USP38; leading to stabilization. In terms of processing, acetylation at Lys-129 results in its homodimerization, while deacetylation promotes the formation of monomers which heterodimerize with XPO1/CRM1 which facilitates its nuclear export. The acetylated form represses STAT3 transactivation. The dynamic equilibrium between its acetylation and deacetylation at Lys-129 determines its interaction with XPO1/CRM1, its subsequent subcellular localization, and its ability to inhibit STAT3 transactivation. Post-translationally, in vitro phosphorylation at Thr-117 by AURKB prevents interaction with INCENP and localization to mitotic chromosomes. Phosphorylation at Thr-48 by CK2 is critical for its mitotic and anti-apoptotic activities. Phosphorylation at Thr-34 by CDK15 is critical for its anti-apoptotic activity. Phosphorylation at Ser-20 by AURKC is critical for regulation of proper chromosome alignment and segregation, and possibly cytokinesis.

Its subcellular location is the cytoplasm. It localises to the nucleus. It is found in the chromosome. The protein resides in the centromere. The protein localises to the cytoskeleton. Its subcellular location is the spindle. It localises to the kinetochore. It is found in the midbody. In terms of biological role, multitasking protein that has dual roles in promoting cell proliferation and preventing apoptosis. Component of a chromosome passage protein complex (CPC) which is essential for chromosome alignment and segregation during mitosis and cytokinesis. Acts as an important regulator of the localization of this complex; directs CPC movement to different locations from the inner centromere during prometaphase to midbody during cytokinesis and participates in the organization of the center spindle by associating with polymerized microtubules. Involved in the recruitment of CPC to centromeres during early mitosis via association with histone H3 phosphorylated at 'Thr-3' (H3pT3) during mitosis. The complex with RAN plays a role in mitotic spindle formation by serving as a physical scaffold to help deliver the RAN effector molecule TPX2 to microtubules. May counteract a default induction of apoptosis in G2/M phase. The acetylated form represses STAT3 transactivation of target gene promoters. May play a role in neoplasia. Inhibitor of CASP3 and CASP7. Essential for the maintenance of mitochondrial integrity and function. This is Baculoviral IAP repeat-containing protein 5 (BIRC5) from Felis catus (Cat).